Here is a 305-residue protein sequence, read N- to C-terminus: Phosphatidylinositol:ceramide inositolphosphotransferase 2 (305 aa).

6 helical membrane passes run 34 to 54, 81 to 101, 105 to 125, 168 to 188, 198 to 218, and 221 to 241; these read LLAGLICQYIHGLAAKGVHYI, ETVFTSVFLSFFLWTFHPFIL, KIYTVLIWCRVLAFLVACQFL, VMYGCGDLIFSSHMIFTLVFV, RFIKLFGWLTAIVQSLLIIAS, and HYSVDVVVAWYTVNLVVFCLD. H180 is a catalytic residue. Residues H221 and D225 contribute to the active site.

Belongs to the sphingomyelin synthase family. Expressed in leaves, roots, stems, flowers and siliques.

The protein resides in the golgi apparatus. It is found in the trans-Golgi network membrane. The enzyme catalyses an N-(2R-hydroxy-very-long-chain fatty acyl)-(R)-4-hydroxysphingoid base + a 1,2-diacyl-sn-glycero-3-phospho-(1D-myo-inositol) = a 1D-myo-inositol-1-phospho-N-[(R)-2-hydroxy-very-long-chain fatty acyl]-(R)-4-hydroxysphingoid base + a 1,2-diacyl-sn-glycerol. The protein operates within sphingolipid metabolism. Its function is as follows. Catalyzes the transfer of the phosphorylinositol group from phosphatidylinositol (PI) to phytoceramide, an essential step in sphingolipid biosynthesis. May play an important role in modulating plant programmed cell death (PCD) associated with defense (e.g. toward Golovinomyces cichoracearum) by promoting sphingolipid metabolism and thus regulating ceramide accumulation. The chain is Phosphatidylinositol:ceramide inositolphosphotransferase 2 from Arabidopsis thaliana (Mouse-ear cress).